The following is a 288-amino-acid chain: Phosphatidylserine decarboxylase proenzyme (288 aa).

Active-site charge relay system; for autoendoproteolytic cleavage activity residues include D90, H147, and S254. S254 (schiff-base intermediate with substrate; via pyruvic acid; for decarboxylase activity) is an active-site residue. S254 carries the post-translational modification Pyruvic acid (Ser); by autocatalysis.

Belongs to the phosphatidylserine decarboxylase family. PSD-B subfamily. Prokaryotic type I sub-subfamily. As to quaternary structure, heterodimer of a large membrane-associated beta subunit and a small pyruvoyl-containing alpha subunit. Requires pyruvate as cofactor. Is synthesized initially as an inactive proenzyme. Formation of the active enzyme involves a self-maturation process in which the active site pyruvoyl group is generated from an internal serine residue via an autocatalytic post-translational modification. Two non-identical subunits are generated from the proenzyme in this reaction, and the pyruvate is formed at the N-terminus of the alpha chain, which is derived from the carboxyl end of the proenzyme. The autoendoproteolytic cleavage occurs by a canonical serine protease mechanism, in which the side chain hydroxyl group of the serine supplies its oxygen atom to form the C-terminus of the beta chain, while the remainder of the serine residue undergoes an oxidative deamination to produce ammonia and the pyruvoyl prosthetic group on the alpha chain. During this reaction, the Ser that is part of the protease active site of the proenzyme becomes the pyruvoyl prosthetic group, which constitutes an essential element of the active site of the mature decarboxylase.

The protein resides in the cell membrane. The catalysed reaction is a 1,2-diacyl-sn-glycero-3-phospho-L-serine + H(+) = a 1,2-diacyl-sn-glycero-3-phosphoethanolamine + CO2. The protein operates within phospholipid metabolism; phosphatidylethanolamine biosynthesis; phosphatidylethanolamine from CDP-diacylglycerol: step 2/2. Functionally, catalyzes the formation of phosphatidylethanolamine (PtdEtn) from phosphatidylserine (PtdSer). The polypeptide is Phosphatidylserine decarboxylase proenzyme (Hamiltonella defensa subsp. Acyrthosiphon pisum (strain 5AT)).